The chain runs to 1220 residues: von Willebrand factor A domain-containing protein 5B1 (1220 aa).

Residues 1 to 18 form the signal peptide; sequence MPGLLNWITGAALPLTAS. In terms of domain architecture, VIT spans 19–149; sequence DVTSCVSGYA…NVTIFISTSS (131 aa). Asn140 carries an N-linked (GlcNAc...) asparagine glycan. The VWFA domain occupies 361-529; sequence EFIFLIDRSS…RLQPKMVKSL (169 aa). Residue Asn650 is glycosylated (N-linked (GlcNAc...) asparagine). The interval 715–807 is disordered; it reads NSGQDLNQGP…SPSRPATPAP (93 aa). The segment covering 757-774 has biased composition (basic and acidic residues); that stretch reads VRERTSDSRSPGDLEPSH. Positions 796-807 are enriched in low complexity; it reads RASPSRPATPAP. Tyr881 is subject to Phosphotyrosine. 2 disordered regions span residues 937–962 and 976–995; these read RGTSSGFGRPQTMLGEDSAPGNGKFQ and EARSPGREKHGASEGPQRSL. A glycan (N-linked (GlcNAc...) asparagine) is linked at Asn1017. Positions 1093–1111 are enriched in polar residues; it reads TTRPSESKTPSPQLCTSSP. Residues 1093–1115 are disordered; sequence TTRPSESKTPSPQLCTSSPPRHP.

Its subcellular location is the secreted. The polypeptide is von Willebrand factor A domain-containing protein 5B1 (VWA5B1) (Homo sapiens (Human)).